Here is a 337-residue protein sequence, read N- to C-terminus: DNA-directed RNA polymerase subunit alpha (337 aa).

Residues 1-233 (MVREKVTVST…DLFIPFLHME (233 aa)) are alpha N-terminal domain (alpha-NTD). The segment at 265–337 (KKIALKSIFI…FVIDLAKNKF (73 aa)) is alpha C-terminal domain (alpha-CTD).

This sequence belongs to the RNA polymerase alpha chain family. In terms of assembly, in plastids the minimal PEP RNA polymerase catalytic core is composed of four subunits: alpha, beta, beta', and beta''. When a (nuclear-encoded) sigma factor is associated with the core the holoenzyme is formed, which can initiate transcription.

It localises to the plastid. The protein localises to the chloroplast. The enzyme catalyses RNA(n) + a ribonucleoside 5'-triphosphate = RNA(n+1) + diphosphate. DNA-dependent RNA polymerase catalyzes the transcription of DNA into RNA using the four ribonucleoside triphosphates as substrates. This is DNA-directed RNA polymerase subunit alpha from Solanum lycopersicum (Tomato).